Here is an 878-residue protein sequence, read N- to C-terminus: Alanine--tRNA ligase (878 aa).

Zn(2+) is bound by residues His562, His566, Cys670, and His674.

It belongs to the class-II aminoacyl-tRNA synthetase family. It depends on Zn(2+) as a cofactor.

It localises to the cytoplasm. It catalyses the reaction tRNA(Ala) + L-alanine + ATP = L-alanyl-tRNA(Ala) + AMP + diphosphate. Catalyzes the attachment of alanine to tRNA(Ala) in a two-step reaction: alanine is first activated by ATP to form Ala-AMP and then transferred to the acceptor end of tRNA(Ala). Also edits incorrectly charged Ser-tRNA(Ala) and Gly-tRNA(Ala) via its editing domain. This chain is Alanine--tRNA ligase, found in Acinetobacter baylyi (strain ATCC 33305 / BD413 / ADP1).